The following is a 555-amino-acid chain: Pyrophosphate--fructose 6-phosphate 1-phosphotransferase (555 aa).

Residue Gly-82 coordinates diphosphate. Substrate is bound at residue Arg-146. Asp-176 provides a ligand contact to Mg(2+). Residues Thr-204–Asp-206, Lys-243–Tyr-244, Met-251–Arg-253, Glu-312, and Tyr-428–Arg-431 each bind substrate. The Proton acceptor role is filled by Asp-206.

It belongs to the phosphofructokinase type A (PFKA) family. PPi-dependent PFK group II subfamily. Clade 'Long' sub-subfamily. As to quaternary structure, homodimer. The cofactor is Mg(2+).

The protein resides in the cytoplasm. The enzyme catalyses beta-D-fructose 6-phosphate + diphosphate = beta-D-fructose 1,6-bisphosphate + phosphate + H(+). It functions in the pathway carbohydrate degradation; glycolysis; D-glyceraldehyde 3-phosphate and glycerone phosphate from D-glucose: step 3/4. Non-allosteric. Catalyzes the phosphorylation of D-fructose 6-phosphate, the first committing step of glycolysis. Uses inorganic phosphate (PPi) as phosphoryl donor instead of ATP like common ATP-dependent phosphofructokinases (ATP-PFKs), which renders the reaction reversible, and can thus function both in glycolysis and gluconeogenesis. Consistently, PPi-PFK can replace the enzymes of both the forward (ATP-PFK) and reverse (fructose-bisphosphatase (FBPase)) reactions. This Borreliella burgdorferi (strain ATCC 35210 / DSM 4680 / CIP 102532 / B31) (Borrelia burgdorferi) protein is Pyrophosphate--fructose 6-phosphate 1-phosphotransferase.